Reading from the N-terminus, the 219-residue chain is Probable transaldolase (219 aa).

Lys83 acts as the Schiff-base intermediate with substrate in catalysis.

It belongs to the transaldolase family. Type 3B subfamily.

The protein resides in the cytoplasm. The catalysed reaction is D-sedoheptulose 7-phosphate + D-glyceraldehyde 3-phosphate = D-erythrose 4-phosphate + beta-D-fructose 6-phosphate. It functions in the pathway carbohydrate degradation; pentose phosphate pathway; D-glyceraldehyde 3-phosphate and beta-D-fructose 6-phosphate from D-ribose 5-phosphate and D-xylulose 5-phosphate (non-oxidative stage): step 2/3. Its function is as follows. Transaldolase is important for the balance of metabolites in the pentose-phosphate pathway. This is Probable transaldolase from Cereibacter sphaeroides (strain ATCC 17029 / ATH 2.4.9) (Rhodobacter sphaeroides).